A 375-amino-acid chain; its full sequence is Growth/differentiation factor 8 (375 aa).

An N-terminal signal peptide occupies residues Met-1–Leu-23. Positions Asp-24–Arg-266 are excised as a propeptide. N-linked (GlcNAc...) asparagine glycosylation occurs at Asn-71. 4 disulfide bridges follow: Cys-272–Cys-282, Cys-281–Cys-340, Cys-309–Cys-372, and Cys-313–Cys-374.

Belongs to the TGF-beta family. As to quaternary structure, homodimer; disulfide-linked.

The protein resides in the secreted. In terms of biological role, acts specifically as a negative regulator of skeletal muscle growth. This chain is Growth/differentiation factor 8 (MSTN), found in Excalfactoria chinensis (Blue-breasted quail).